A 101-amino-acid chain; its full sequence is Small ribosomal subunit protein uS10 (101 aa).

Belongs to the universal ribosomal protein uS10 family. Part of the 30S ribosomal subunit.

Its function is as follows. Involved in the binding of tRNA to the ribosomes. In Brachyspira hyodysenteriae (Treponema hyodysenteriae), this protein is Small ribosomal subunit protein uS10.